The primary structure comprises 111 residues: Thioredoxin 2 (111 aa).

The Thioredoxin domain maps to 2–109 (SKGVITITDA…LLSFLDTHLN (108 aa)). Cys-33 and Cys-36 are joined by a disulfide.

This sequence belongs to the thioredoxin family.

Its function is as follows. Participates in various redox reactions through the reversible oxidation of its active center dithiol to a disulfide and catalyzes dithiol-disulfide exchange reactions. This Nostoc sp. (strain PCC 7120 / SAG 25.82 / UTEX 2576) protein is Thioredoxin 2 (trxB).